The primary structure comprises 236 residues: Carbonyl reductase family member 4 (236 aa).

Residues 11-14 (SRGI), 34-35 (RD), Asp-55, and 82-84 (SAG) each bind NADP(+). Ser-134 lines the substrate pocket. NADP(+) is bound by residues Tyr-147, Lys-151, and 180–182 (IHT). Tyr-147 acts as the Proton acceptor in catalysis.

The protein belongs to the short-chain dehydrogenases/reductases (SDR) family. In terms of assembly, homotetramer (in vitro). Heterotetramer with HSD17B8; contains two molecules each of HSD17B8 and CBR4.

The protein localises to the mitochondrion matrix. Its pathway is lipid metabolism; fatty acid biosynthesis. Functionally, the heterotetramer with HSD17B8 has NADH-dependent 3-ketoacyl-acyl carrier protein reductase activity, and thereby plays a role in mitochondrial fatty acid biosynthesis. Within the heterotetramer, HSD17B8 binds NADH; CBR4 binds NADPD. The homotetramer has NADPH-dependent quinone reductase activity. Both homotetramer and the heterotetramer have broad in vitro substrate specificity and can reduce 9,10-phenanthrenequinone, 1,4-benzoquinone and various other o-quinones and p-quinones. This Xenopus tropicalis (Western clawed frog) protein is Carbonyl reductase family member 4 (cbr4).